The chain runs to 1549 residues: Zinc finger MYM-type protein 4 (1549 aa).

Ala-2 carries the N-acetylalanine modification. The segment at 83–108 is disordered; sequence VVSSDNEDEQDCSSKDNLVSSVHTDG. A compositionally biased stretch (polar residues) spans 97 to 106; sequence KDNLVSSVHT. A Phosphothreonine modification is found at Thr-106. Phosphoserine is present on residues Ser-109 and Ser-121. Glycyl lysine isopeptide (Lys-Gly) (interchain with G-Cter in SUMO2) cross-links involve residues Lys-139 and Lys-148. Phosphoserine is present on Ser-161. A Glycyl lysine isopeptide (Lys-Gly) (interchain with G-Cter in SUMO2) cross-link involves residue Lys-195. A Phosphoserine modification is found at Ser-197. Residues Lys-201 and Lys-232 each participate in a glycyl lysine isopeptide (Lys-Gly) (interchain with G-Cter in SUMO2) cross-link. Ser-242 is modified (phosphoserine). Lys-250 is covalently cross-linked (Glycyl lysine isopeptide (Lys-Gly) (interchain with G-Cter in SUMO1); alternate). A Glycyl lysine isopeptide (Lys-Gly) (interchain with G-Cter in SUMO2); alternate cross-link involves residue Lys-250. The segment at 267–291 is disordered; the sequence is GLLDRVKDEPDNAQEYSHGQQQKTQ. Residues Lys-273, Lys-289, Lys-327, Lys-400, Lys-428, and Lys-430 each participate in a glycyl lysine isopeptide (Lys-Gly) (interchain with G-Cter in SUMO2) cross-link. The span at 280–290 shows a compositional bias: polar residues; that stretch reads QEYSHGQQQKT. 9 consecutive MYM-type zinc fingers follow at residues 362 to 402, 414 to 457, 464 to 499, 510 to 544, 554 to 592, 600 to 631, 708 to 742, 749 to 788, and 795 to 829; these read QLFC…PKDV, KDFC…RHEV, HKLC…GSGQ, KKFC…AEMI, ELFC…QYHL, RNFC…LSQG, FQFC…KETV, KSFC…LIQN, and EDFC…SESL. Glycyl lysine isopeptide (Lys-Gly) (interchain with G-Cter in SUMO2) cross-links involve residues Lys-1035 and Lys-1062. Ser-1065 and Ser-1072 each carry phosphoserine. Residues Lys-1081 and Lys-1128 each participate in a glycyl lysine isopeptide (Lys-Gly) (interchain with G-Cter in SUMO2) cross-link. The interval 1124–1185 is disordered; that stretch reads DSELKPFSKG…RRGRKKSVVP (62 aa). Over residues 1125–1135 the composition is skewed to basic and acidic residues; that stretch reads SELKPFSKGET. The segment covering 1161 to 1182 has biased composition (basic residues); it reads SRTRRRHRDGFPQPRRRGRKKS. Phosphoserine occurs at positions 1182 and 1257. Lys-1432 is covalently cross-linked (Glycyl lysine isopeptide (Lys-Gly) (interchain with G-Cter in SUMO2)). Ser-1540, Ser-1543, and Ser-1548 each carry phosphoserine.

In terms of biological role, plays a role in the regulation of cell morphology and cytoskeletal organization. The polypeptide is Zinc finger MYM-type protein 4 (Zmym4) (Mus musculus (Mouse)).